Here is a 2178-residue protein sequence, read N- to C-terminus: Streptococcal hemagglutinin (2178 aa).

An N-terminal signal peptide occupies residues 1 to 90 (MFFKRQKGQY…AVVTSSSVYA (90 aa)). A non-repeat region 1 (NR1) region spans residues 91–137 (EEEQALEKVIDTRDVLATRGEAVLSEEAATTLSSEGANPVESLSDTL). The ser-rich region 1 (SR1) stretch occupies residues 138–219 (SASESASANS…SLISSDSSNS (82 aa)). Over residues 192–244 (TSQSFSSTTSSTQSSNNESLISSDSSNSLNTNQSVSARNQNARVRTRRAVAAN) the composition is skewed to low complexity. Disordered regions lie at residues 192 to 246 (TSQS…ANDT), 495 to 557 (VSAS…SVSA), 584 to 653 (SAST…SVSA), 836 to 857 (SASTSASVSASESASTSASVSA), 884 to 917 (SASTSASVSASESASTSASVSASESASTSASVSA), 944 to 993 (SAST…SESA), 1020 to 1289 (SASV…SVSA), 1341 to 1390 (ASTS…ESAS), 1488 to 1685 (SASV…SVSA), 1725 to 1901 (ASTS…SAST), and 2119 to 2151 (LSQSLSDSQSTSATQSMHDRISKGQLPRTGESE). The non-repeat region 2 (NR2) stretch occupies residues 220 to 449 (LNTNQSVSAR…ANRVVKDLQI (230 aa)). The tract at residues 450-2143 (SKSNSASQSS…SMHDRISKGQ (1694 aa)) is ser-rich region 2 (SR2). Low complexity predominate over residues 2119 to 2130 (LSQSLSDSQSTS). An LPXTG sorting signal motif is present at residues 2144-2148 (LPRTG). Position 2147 is a pentaglycyl murein peptidoglycan amidated threonine (Thr2147). A propeptide spans 2148–2178 (GESESKASILALGIGALGLAFKKRKKNESED) (removed by sortase).

Belongs to the serine-rich repeat protein (SRRP) family. In terms of processing, the protein is glycosylated in vivo; constructs without SR1 and SR2 are not glycosylated.

Its subcellular location is the secreted. The protein resides in the cell wall. Functionally, a cell wall protein involved with PadA in host cell interactions required for colonization and pathogensis. Mediates hemagglutination and adherence to ghst glycoproteins. Recognizes fetuin-A (AHSG), a highly glycosylated human plasma protein, also involved in recognition of human platelets, probably via platelet glycoprotein Ib alpha (GP1BA). Acts in concert with PadA to promote binding to glycosylated human fibronectin (FN1) and vitronectin (VTN), and biofilm formation. Plays a major role in fibronectin and vitronectin binding; binding is mediated by glycosylated regions. Probably mediates interaction of PadA with resting platelets. This chain is Streptococcal hemagglutinin, found in Streptococcus gordonii (strain Challis / ATCC 35105 / BCRC 15272 / CH1 / DL1 / V288).